A 504-amino-acid chain; its full sequence is Lysine--tRNA ligase (504 aa).

Positions 23–31 match the 'HIGH' region motif; sequence PSGPIHIGN.

It belongs to the class-I aminoacyl-tRNA synthetase family.

The protein resides in the cytoplasm. The enzyme catalyses tRNA(Lys) + L-lysine + ATP = L-lysyl-tRNA(Lys) + AMP + diphosphate. The protein is Lysine--tRNA ligase of Picrophilus torridus (strain ATCC 700027 / DSM 9790 / JCM 10055 / NBRC 100828 / KAW 2/3).